Reading from the N-terminus, the 476-residue chain is Bifunctional protein HldE (476 aa).

The tract at residues methionine 1–serine 319 is ribokinase. Asparagine 195–glutamate 198 provides a ligand contact to ATP. Residue aspartate 264 is part of the active site. The cytidylyltransferase stretch occupies residues methionine 345–glutamine 476.

It in the N-terminal section; belongs to the carbohydrate kinase PfkB family. The protein in the C-terminal section; belongs to the cytidylyltransferase family. As to quaternary structure, homodimer.

It carries out the reaction D-glycero-beta-D-manno-heptose 7-phosphate + ATP = D-glycero-beta-D-manno-heptose 1,7-bisphosphate + ADP + H(+). The enzyme catalyses D-glycero-beta-D-manno-heptose 1-phosphate + ATP + H(+) = ADP-D-glycero-beta-D-manno-heptose + diphosphate. The protein operates within nucleotide-sugar biosynthesis; ADP-L-glycero-beta-D-manno-heptose biosynthesis; ADP-L-glycero-beta-D-manno-heptose from D-glycero-beta-D-manno-heptose 7-phosphate: step 1/4. It participates in nucleotide-sugar biosynthesis; ADP-L-glycero-beta-D-manno-heptose biosynthesis; ADP-L-glycero-beta-D-manno-heptose from D-glycero-beta-D-manno-heptose 7-phosphate: step 3/4. Functionally, catalyzes the phosphorylation of D-glycero-D-manno-heptose 7-phosphate at the C-1 position to selectively form D-glycero-beta-D-manno-heptose-1,7-bisphosphate. Catalyzes the ADP transfer from ATP to D-glycero-beta-D-manno-heptose 1-phosphate, yielding ADP-D-glycero-beta-D-manno-heptose. In Shewanella baltica (strain OS195), this protein is Bifunctional protein HldE.